A 421-amino-acid polypeptide reads, in one-letter code: Divalent metal cation transporter MntH (421 aa).

11 helical membrane-spanning segments follow: residues 27-47 (LGPAFIVSVAYVDPGNFATNI), 51-71 (SLFDYHLIWVILWSNVIAIFL), 100-120 (WFLWITAELAAMATDLAEFLG), 128-148 (LFHIPMTYAAFLTGVVTFAIV), 160-180 (GIIFGLVAVISLAYAFELFIA), 201-221 (AMLIAVGILGATVMPHVIYLH), 248-268 (ILVAMNTAFIINAAMLIVSAA), 289-309 (PLLGVFSSWAFGIALLASGFS), 337-357 (LVTMVPAITIIALGIDPLKSL), 358-378 (IVSQVVLSFELPMAIIPLLLI), and 396-416 (IMGVLVASFVMILNGLLLYLT).

Belongs to the NRAMP family.

It localises to the cell membrane. In terms of biological role, h(+)-stimulated, divalent metal cation uptake system. The sequence is that of Divalent metal cation transporter MntH from Caldanaerobacter subterraneus subsp. tengcongensis (strain DSM 15242 / JCM 11007 / NBRC 100824 / MB4) (Thermoanaerobacter tengcongensis).